We begin with the raw amino-acid sequence, 471 residues long: Sulfate adenylyltransferase subunit 1 (471 aa).

One can recognise a tr-type G domain in the interval 24–240; sequence KSLLRFLTCG…ESADVERELE (217 aa). Residues 33 to 40 form a G1 region; sequence GSVDDGKS. A GTP-binding site is contributed by 33 to 40; the sequence is GSVDDGKS. Positions 91–95 are G2; that stretch reads GITID. The tract at residues 112-115 is G3; the sequence is DTPG. Residues 112 to 116 and 167 to 170 contribute to the GTP site; these read DTPGH and NKMD. The segment at 167–170 is G4; sequence NKMD. Residues 204–206 form a G5 region; that stretch reads SAL.

It belongs to the TRAFAC class translation factor GTPase superfamily. Classic translation factor GTPase family. CysN/NodQ subfamily. Heterodimer composed of CysD, the smaller subunit, and CysN.

It carries out the reaction sulfate + ATP + H(+) = adenosine 5'-phosphosulfate + diphosphate. It participates in sulfur metabolism; hydrogen sulfide biosynthesis; sulfite from sulfate: step 1/3. In terms of biological role, with CysD forms the ATP sulfurylase (ATPS) that catalyzes the adenylation of sulfate producing adenosine 5'-phosphosulfate (APS) and diphosphate, the first enzymatic step in sulfur assimilation pathway. APS synthesis involves the formation of a high-energy phosphoric-sulfuric acid anhydride bond driven by GTP hydrolysis by CysN coupled to ATP hydrolysis by CysD. The protein is Sulfate adenylyltransferase subunit 1 of Aeromonas salmonicida (strain A449).